Here is a 657-residue protein sequence, read N- to C-terminus: MASARKASRPMRDVFGDFSDVSLEDSTMEEIRNFQISRNLTKIAPGHSRFLKRNQTLDEKHLLLKENPVLGSGPRLASCRPPTTASRIRANAALMKLAQLETRIMNRKLQRNLSDTESDSMTADAGLPKRADRILSGGALELASQNTDKTSQNQARELPVTENNAQNAKVSRFLKKKQAPVENISPEAPAGKERTLQTPKQKEPARTFDSPDSDEEEMKVLLGSLMDSSREKNTNQGFSSANVSEEEERKLFSVPSQLRAFTVPSVELSSAKPSQTSHLPTSLAADRTLHSTRSRADYPQSHVSSDTASHTPSVSITGAFSNSVSLKMGHVKLVSSPGRSEAETVDEPVSEGADDSLDEFRINILSLDGLAPAVSENSDLEQEEESAQRQKTAGKIFRAEASTGQDAPRQAQARSWASQGKAASAEGDESEVSEHLSASSASAIQQDSTSSMQPPSEAPMVNTVSSAYSEDFENSPSLTASEPTAHSKESLDRTLDALSESSSSVKTDLPQTAESRKKSGRHVTRVLVKDTAVQTPDPAFTYEWTKVASMAAMGPALGGAYVDPTPIANHVISADAIEALTAYSPAVLALHDVLKQQLSLTQQFIQASRHLHASLLRSLDADSFHYHTLEEAKEYIRCHRPAPLTMEDALEEVNKEL.

A Phosphoserine modification is found at Ser-114. Disordered regions lie at residues 142 to 216 (LASQ…SDEE), 228 to 248 (SSREKNTNQGFSSANVSEEEE), 291 to 312 (STRSRADYPQSHVSSDTASHTP), 335 to 354 (SSPGRSEAETVDEPVSEGAD), and 399 to 522 (AEAS…SGRH). Positions 143 to 169 (ASQNTDKTSQNQARELPVTENNAQNAK) are enriched in polar residues. A compositionally biased stretch (basic and acidic residues) spans 190–206 (AGKERTLQTPKQKEPAR). The residue at position 213 (Ser-213) is a Phosphoserine. Composition is skewed to polar residues over residues 234–243 (TNQGFSSANV) and 301–312 (SHVSSDTASHTP). The span at 343–354 (ETVDEPVSEGAD) shows a compositional bias: acidic residues. Positions 437–451 (SASSASAIQQDSTSS) are enriched in low complexity. The segment covering 462–484 (NTVSSAYSEDFENSPSLTASEPT) has biased composition (polar residues). Residues 485–495 (AHSKESLDRTL) are compositionally biased toward basic and acidic residues. Residues 499 to 513 (SESSSSVKTDLPQTA) are compositionally biased toward polar residues.

This is an uncharacterized protein from Homo sapiens (Human).